The chain runs to 117 residues: Immunoglobulin kappa variable 1-27 (117 aa).

The first 22 residues, 1–22 (MDMRVPAQLLGLLLLWLPDTRC), serve as a signal peptide directing secretion. The segment at 23 to 45 (DIQMTQSPSSLSASVGDRVTITC) is framework-1. The Ig-like domain maps to 23-117 (DIQMTQSPSS…YYCQKYNSAP (95 aa)). A disulfide bond links cysteine 45 and cysteine 110. Residues 46–56 (RASQGISNYLA) are complementarity-determining-1. The tract at residues 57–71 (WYQQKPGKVPKLLIY) is framework-2. The interval 72 to 78 (AASTLQS) is complementarity-determining-2. The framework-3 stretch occupies residues 79 to 110 (GVPSRFSGSGSGTDFTLTISSLQPEDVATYYC). Residues 111 to 117 (QKYNSAP) form a complementarity-determining-3 region.

Immunoglobulins are composed of two identical heavy chains and two identical light chains; disulfide-linked.

The protein localises to the secreted. Its subcellular location is the cell membrane. Functionally, v region of the variable domain of immunoglobulin light chains that participates in the antigen recognition. Immunoglobulins, also known as antibodies, are membrane-bound or secreted glycoproteins produced by B lymphocytes. In the recognition phase of humoral immunity, the membrane-bound immunoglobulins serve as receptors which, upon binding of a specific antigen, trigger the clonal expansion and differentiation of B lymphocytes into immunoglobulins-secreting plasma cells. Secreted immunoglobulins mediate the effector phase of humoral immunity, which results in the elimination of bound antigens. The antigen binding site is formed by the variable domain of one heavy chain, together with that of its associated light chain. Thus, each immunoglobulin has two antigen binding sites with remarkable affinity for a particular antigen. The variable domains are assembled by a process called V-(D)-J rearrangement and can then be subjected to somatic hypermutations which, after exposure to antigen and selection, allow affinity maturation for a particular antigen. In Homo sapiens (Human), this protein is Immunoglobulin kappa variable 1-27.